Here is a 110-residue protein sequence, read N- to C-terminus: Nucleoid-associated protein RALTA_A1934 (110 aa).

Residues 88–98 (TTQEKMGSMTS) are compositionally biased toward polar residues. The interval 88–110 (TTQEKMGSMTSGLPLPPGFKLPF) is disordered. The span at 101 to 110 (PLPPGFKLPF) shows a compositional bias: pro residues.

It belongs to the YbaB/EbfC family. In terms of assembly, homodimer.

The protein localises to the cytoplasm. Its subcellular location is the nucleoid. Binds to DNA and alters its conformation. May be involved in regulation of gene expression, nucleoid organization and DNA protection. The protein is Nucleoid-associated protein RALTA_A1934 of Cupriavidus taiwanensis (strain DSM 17343 / BCRC 17206 / CCUG 44338 / CIP 107171 / LMG 19424 / R1) (Ralstonia taiwanensis (strain LMG 19424)).